A 327-amino-acid polypeptide reads, in one-letter code: MAAQESLHVKTPLRDSMALSKLAGTSVFLKMDSSQPSGSFKIRGIGHLCKMKAKQGCRHFVCSSAGNAGMATAYAARRLGIPATIVVPNTTPALTIERLKNEGATVEVVGEMLDEAIQVAKALEKNNPGWVYISPFDDPLIWEGHTSLVKELKETLSAKPGAIVLSVGGGGLLCGVVQGLREVGWEDVPIIAMETFGAHSFHAAIKEGKLVTLPKITSVAKALGVNTVGAQTLKLFYEHPIFSEVISDQEAVSALEKFVDDEKILVEPACGAALAAVYSRVVCRLQDEGRLQTPLASLVVIVCGGSNISLAQLQALKVQLGLNGLPE.

A2 is subject to N-acetylalanine. At K41 the chain carries N6-(pyridoxal phosphate)lysine. Pyridoxal 5'-phosphate is bound at residue P128.

Belongs to the serine/threonine dehydratase family. Homodimer. Pyridoxal 5'-phosphate is required as a cofactor.

The protein localises to the cytoplasm. The enzyme catalyses L-serine = pyruvate + NH4(+). The catalysed reaction is L-threonine = 2-oxobutanoate + NH4(+). It participates in carbohydrate biosynthesis; gluconeogenesis. In terms of biological role, catalyzes the pyridoxal-phosphate-dependent dehydrative deamination of L-threonine and L-serine to ammonia and alpha-ketobutyrate and pyruvate, respectively. The polypeptide is L-serine dehydratase/L-threonine deaminase (Sds) (Mus musculus (Mouse)).